Here is a 518-residue protein sequence, read N- to C-terminus: Subtilisin-like protease 1 (518 aa).

Positions 1 to 19 (MGVFRFISISLAAVSAANA) are cleaved as a signal peptide. A propeptide spanning residues 20 to 116 (AQILSMPHAQ…VEPDTIISVH (97 aa)) is cleaved from the precursor. The Inhibitor I9 domain occupies 34–115 (SYIVMMKDDT…FVEPDTIISV (82 aa)). A Peptidase S8 domain is found at 126–400 (SWGLARISNP…NVLINNGGAK (275 aa)). Active-site charge relay system residues include Asp-158 and His-190. Residues 175–198 (GSNQVNDGDDRDGSGHGTHTSGTM) are disordered. N-linked (GlcNAc...) asparagine glycans are attached at residues Asn-233 and Asn-251. Positions 282-294 (NDNQDAQSSSPAS) are enriched in polar residues. The tract at residues 282–312 (NDNQDAQSSSPASEPSVCTVGSSAEDDSRSS) is disordered. Ser-345 functions as the Charge relay system in the catalytic mechanism. Residues 378-394 (TSSITDAGPGTPTNVLI) show a composition bias toward polar residues. The disordered stretch occupies residues 378–496 (TSSITDAGPG…PYPGGDNFDF (119 aa)). Composition is skewed to pro residues over residues 405–470 (NPNP…PGEP) and 478–487 (APAPQHPHTP).

The protein belongs to the peptidase S8 family.

The protein resides in the secreted. In terms of biological role, secreted subtilisin-like serine protease with keratinolytic activity that contributes to pathogenicity. The polypeptide is Subtilisin-like protease 1 (SUB1) (Trichophyton verrucosum (strain HKI 0517)).